Reading from the N-terminus, the 178-residue chain is MNAPKEGDYIAIQSYKHDGSLHRTWRDTMVLKTSENAVIGCNDHTLVTESDGRKWVTREPALIYFHKKYWFNVVAMIREGGVSYYCNLASPHVMDQEALKYIDYDLDVKVFPNGEKRLLDVDEYEAHSAKWHYSAETDRILKANVKVLVDWINNGKGPFSKEYIDIWYNRYQELAHHR.

Catalysis depends on R23, which acts as the Proton donor. Mg(2+) contacts are provided by N87, D103, D105, D107, D120, and E123.

Belongs to the Ntdp family. The cofactor is Mg(2+).

It catalyses the reaction a ribonucleoside 5'-triphosphate + H2O = a ribonucleoside 5'-diphosphate + phosphate + H(+). It carries out the reaction a ribonucleoside 5'-diphosphate + H2O = a ribonucleoside 5'-phosphate + phosphate + H(+). Its function is as follows. Has nucleoside phosphatase activity towards nucleoside triphosphates and nucleoside diphosphates. This chain is Nucleoside triphosphate/diphosphate phosphatase, found in Latilactobacillus sakei subsp. sakei (strain 23K) (Lactobacillus sakei subsp. sakei).